The primary structure comprises 220 residues: N-(5'-phosphoribosyl)anthranilate isomerase (220 aa).

The protein belongs to the TrpF family.

The enzyme catalyses N-(5-phospho-beta-D-ribosyl)anthranilate = 1-(2-carboxyphenylamino)-1-deoxy-D-ribulose 5-phosphate. It participates in amino-acid biosynthesis; L-tryptophan biosynthesis; L-tryptophan from chorismate: step 3/5. This chain is N-(5'-phosphoribosyl)anthranilate isomerase, found in Xylella fastidiosa (strain M23).